The primary structure comprises 334 residues: N-acetyl-gamma-glutamyl-phosphate reductase (334 aa).

Residue Cys142 is part of the active site.

Belongs to the NAGSA dehydrogenase family. Type 1 subfamily.

The protein localises to the cytoplasm. It catalyses the reaction N-acetyl-L-glutamate 5-semialdehyde + phosphate + NADP(+) = N-acetyl-L-glutamyl 5-phosphate + NADPH + H(+). It participates in amino-acid biosynthesis; L-arginine biosynthesis; N(2)-acetyl-L-ornithine from L-glutamate: step 3/4. Functionally, catalyzes the NADPH-dependent reduction of N-acetyl-5-glutamyl phosphate to yield N-acetyl-L-glutamate 5-semialdehyde. In Pelodictyon phaeoclathratiforme (strain DSM 5477 / BU-1), this protein is N-acetyl-gamma-glutamyl-phosphate reductase.